Reading from the N-terminus, the 213-residue chain is Proteasome subunit beta (213 aa).

A propeptide spans 1–11 (removed in mature form; by autocatalysis); the sequence is MPEQYQESMTG. The active-site Nucleophile is the Thr12.

It belongs to the peptidase T1B family. The 20S proteasome core is composed of 14 alpha and 14 beta subunits that assemble into four stacked heptameric rings, resulting in a barrel-shaped structure. The two inner rings, each composed of seven catalytic beta subunits, are sandwiched by two outer rings, each composed of seven alpha subunits. The catalytic chamber with the active sites is on the inside of the barrel. Has a gated structure, the ends of the cylinder being occluded by the N-termini of the alpha-subunits. Is capped at one or both ends by the proteasome regulatory ATPase, PAN.

It localises to the cytoplasm. It carries out the reaction Cleavage of peptide bonds with very broad specificity.. Its activity is regulated as follows. The formation of the proteasomal ATPase PAN-20S proteasome complex, via the docking of the C-termini of PAN into the intersubunit pockets in the alpha-rings, triggers opening of the gate for substrate entry. Interconversion between the open-gate and close-gate conformations leads to a dynamic regulation of the 20S proteasome proteolysis activity. Component of the proteasome core, a large protease complex with broad specificity involved in protein degradation. The chain is Proteasome subunit beta from Methanoregula boonei (strain DSM 21154 / JCM 14090 / 6A8).